Here is a 267-residue protein sequence, read N- to C-terminus: tRNA pseudouridine synthase A (267 aa).

The active-site Nucleophile is D55. Position 111 (Y111) interacts with substrate.

The protein belongs to the tRNA pseudouridine synthase TruA family.

It carries out the reaction uridine(38/39/40) in tRNA = pseudouridine(38/39/40) in tRNA. Its function is as follows. Formation of pseudouridine at positions 38, 39 and 40 in the anticodon stem and loop of transfer RNAs. The protein is tRNA pseudouridine synthase A of Thermococcus gammatolerans (strain DSM 15229 / JCM 11827 / EJ3).